The sequence spans 133 residues: ATP synthase epsilon chain (133 aa).

Belongs to the ATPase epsilon chain family. F-type ATPases have 2 components, CF(1) - the catalytic core - and CF(0) - the membrane proton channel. CF(1) has five subunits: alpha(3), beta(3), gamma(1), delta(1), epsilon(1). CF(0) has three main subunits: a, b and c.

It is found in the cell membrane. Produces ATP from ADP in the presence of a proton gradient across the membrane. This is ATP synthase epsilon chain from Lawsonia intracellularis (strain PHE/MN1-00).